The following is a 496-amino-acid chain: Adenosylhomocysteinase (496 aa).

Residues threonine 68, aspartate 157, and glutamate 219 each coordinate substrate. 220-222 (TTT) is an NAD(+) binding site. Substrate is bound by residues lysine 249 and aspartate 253. Residues asparagine 254, 283 to 288 (GYGDVG), glutamate 306, asparagine 341, 362 to 364 (IGH), and asparagine 410 each bind NAD(+).

This sequence belongs to the adenosylhomocysteinase family. NAD(+) serves as cofactor.

The protein localises to the cytoplasm. It catalyses the reaction S-adenosyl-L-homocysteine + H2O = L-homocysteine + adenosine. Its pathway is amino-acid biosynthesis; L-homocysteine biosynthesis; L-homocysteine from S-adenosyl-L-homocysteine: step 1/1. May play a key role in the regulation of the intracellular concentration of adenosylhomocysteine. In Mycolicibacterium paratuberculosis (strain ATCC BAA-968 / K-10) (Mycobacterium paratuberculosis), this protein is Adenosylhomocysteinase.